We begin with the raw amino-acid sequence, 633 residues long: tRNA uridine 5-carboxymethylaminomethyl modification enzyme MnmG (633 aa).

Residue 13–18 (GGGHAG) participates in FAD binding. 273–287 (GPRYCPSIEDKINRF) is a binding site for NAD(+).

Belongs to the MnmG family. As to quaternary structure, homodimer. Heterotetramer of two MnmE and two MnmG subunits. It depends on FAD as a cofactor.

It localises to the cytoplasm. In terms of biological role, NAD-binding protein involved in the addition of a carboxymethylaminomethyl (cmnm) group at the wobble position (U34) of certain tRNAs, forming tRNA-cmnm(5)s(2)U34. In Pseudoalteromonas atlantica (strain T6c / ATCC BAA-1087), this protein is tRNA uridine 5-carboxymethylaminomethyl modification enzyme MnmG.